The following is an 857-amino-acid chain: Putative disease resistance protein At1g50180 (857 aa).

The stretch at 27-60 forms a coiled coil; that stretch reads IGDQVKQLQDELKRLNCFLKDADEKQHESERVRN. The NB-ARC domain occupies 148–461; it reads SLREQRQSFP…AEGMVMPVKH (314 aa). 192 to 199 provides a ligand contact to ATP; sequence GMGGLGKT. LRR repeat units follow at residues 653 to 678, 680 to 703, 754 to 780, and 791 to 816; these read MTSL…SLSK, LKRL…DVTQ, LPNL…NLEN, and MMRL…RFLK.

It belongs to the disease resistance NB-LRR family.

In terms of biological role, potential disease resistance protein. The polypeptide is Putative disease resistance protein At1g50180 (Arabidopsis thaliana (Mouse-ear cress)).